The sequence spans 522 residues: Na(+)/H(+) antiporter NhaB (522 aa).

9 consecutive transmembrane segments (helical) span residues 13 to 33 (FLGN…IINP), 98 to 118 (LLLV…LFVF), 140 to 160 (AFLS…SVSV), 239 to 259 (FFIR…LVCL), 304 to 324 (AIIG…LVGL), 356 to 376 (LTVF…TPII), 390 to 410 (LFYL…VGTV), 446 to 466 (ATPN…APLI), and 477 to 497 (ALPY…FLLV).

This sequence belongs to the NhaB Na(+)/H(+) (TC 2.A.34) antiporter family.

The protein resides in the cell inner membrane. It carries out the reaction 2 Na(+)(in) + 3 H(+)(out) = 2 Na(+)(out) + 3 H(+)(in). In terms of biological role, na(+)/H(+) antiporter that extrudes sodium in exchange for external protons. The chain is Na(+)/H(+) antiporter NhaB from Yersinia pestis bv. Antiqua (strain Angola).